The following is a 619-amino-acid chain: Sorting nexin-41 (619 aa).

Positions 1–95 are disordered; that stretch reads MWNDEDNNPY…ELVPRRKPGG (95 aa). Residues 108 to 224 enclose the PX domain; that stretch reads PELPILITEA…WRFLDPNSSW (117 aa). Arg142, Ser144, Lys168, and Arg191 together coordinate a 1,2-diacyl-sn-glycero-3-phospho-(1D-myo-inositol-3-phosphate). The segment at 444-510 is disordered; sequence YLSSSQQIQP…GSPSHKKAAS (67 aa). The segment covering 454-467 has biased composition (basic and acidic residues); sequence PRREPPAQHRRDGS.

It belongs to the sorting nexin family.

The protein localises to the endosome membrane. Its subcellular location is the endomembrane system. In terms of biological role, may be required for cytoplasm to vacuole transport (Cvt) and pexophagy. This chain is Sorting nexin-41 (vsp-6), found in Neurospora crassa (strain ATCC 24698 / 74-OR23-1A / CBS 708.71 / DSM 1257 / FGSC 987).